A 400-amino-acid chain; its full sequence is Nicotinate phosphoribosyltransferase (400 aa).

A Phosphohistidine; by autocatalysis modification is found at His-220.

It belongs to the NAPRTase family. Post-translationally, transiently phosphorylated on a His residue during the reaction cycle. Phosphorylation strongly increases the affinity for substrates and increases the rate of nicotinate D-ribonucleotide production. Dephosphorylation regenerates the low-affinity form of the enzyme, leading to product release.

The enzyme catalyses nicotinate + 5-phospho-alpha-D-ribose 1-diphosphate + ATP + H2O = nicotinate beta-D-ribonucleotide + ADP + phosphate + diphosphate. It functions in the pathway cofactor biosynthesis; NAD(+) biosynthesis; nicotinate D-ribonucleotide from nicotinate: step 1/1. Functionally, catalyzes the synthesis of beta-nicotinate D-ribonucleotide from nicotinate and 5-phospho-D-ribose 1-phosphate at the expense of ATP. The chain is Nicotinate phosphoribosyltransferase from Escherichia coli O157:H7.